A 233-amino-acid chain; its full sequence is Glycerol-3-phosphate acyltransferase (233 aa).

The next 5 membrane-spanning stretches (helical) occupy residues 7–27 (WIII…GYII), 94–114 (ISIV…YIGF), 127–147 (VIAI…IVAF), 153–173 (SIGS…GVLI), and 185–205 (ISYE…LLII).

Belongs to the PlsY family. As to quaternary structure, probably interacts with PlsX.

It is found in the cell membrane. It catalyses the reaction an acyl phosphate + sn-glycerol 3-phosphate = a 1-acyl-sn-glycero-3-phosphate + phosphate. It participates in lipid metabolism; phospholipid metabolism. In terms of biological role, catalyzes the transfer of an acyl group from acyl-phosphate (acyl-PO(4)) to glycerol-3-phosphate (G3P) to form lysophosphatidic acid (LPA). This enzyme utilizes acyl-phosphate as fatty acyl donor, but not acyl-CoA or acyl-ACP. The sequence is that of Glycerol-3-phosphate acyltransferase from Acholeplasma laidlawii.